Here is a 199-residue protein sequence, read N- to C-terminus: Recombination protein RecR (199 aa).

Residues 57 to 72 (CNLCNNFSEQEICPLC) form a C4-type zinc finger. Positions 80-175 (TLLCIVEMPS…QVSRIARGLP (96 aa)) constitute a Toprim domain.

This sequence belongs to the RecR family.

Functionally, may play a role in DNA repair. It seems to be involved in an RecBC-independent recombinational process of DNA repair. It may act with RecF and RecO. The sequence is that of Recombination protein RecR from Methylobacillus flagellatus (strain ATCC 51484 / DSM 6875 / VKM B-1610 / KT).